Here is a 117-residue protein sequence, read N- to C-terminus: Non-specific lipid-transfer protein Lac s 1 (117 aa).

The signal sequence occupies residues 1-25 (MARMAMMILCVVLTCMVVATPYTEA). Cystine bridges form between Cys29–Cys76, Cys39–Cys53, Cys54–Cys99, and Cys74–Cys113.

Belongs to the plant LTP family.

Its function is as follows. Plant non-specific lipid-transfer proteins transfer phospholipids as well as galactolipids across membranes. May play a role in wax or cutin deposition in the cell walls of expanding epidermal cells and certain secretory tissues. The protein is Non-specific lipid-transfer protein Lac s 1 of Lactuca sativa (Garden lettuce).